Reading from the N-terminus, the 383-residue chain is TnpB-like protein ORF383B (383 aa).

Residues Cys-328, Cys-331, Cys-345, and Cys-348 each contribute to the Zn(2+) site.

This sequence in the N-terminal section; belongs to the transposase 2 family. It in the C-terminal section; belongs to the transposase 35 family.

This chain is TnpB-like protein ORF383B, found in Acidianus convivator (ATV).